Reading from the N-terminus, the 551-residue chain is Alkaline nuclease (551 aa).

It belongs to the herpesviridae alkaline nuclease family. Interacts with major DNA-binding protein; this interaction increases the nuclease processivity of the alkaline exonuclease.

It is found in the host nucleus. The protein resides in the host cytoplasm. Plays a role in processing non linear or branched viral DNA intermediates in order to promote the production of mature packaged unit-length linear progeny viral DNA molecules. Exhibits endonuclease and exonuclease activities and accepts both double-stranded and single-stranded DNA as substrate. Exonuclease digestion of DNA is in the 5'-&gt; 3' direction and the products are 5'-monophosphate nucleosides. Additionally, forms a recombinase with the major DNA-binding protein, which displays strand exchange activity. The polypeptide is Alkaline nuclease (Varicella-zoster virus (strain Oka vaccine) (HHV-3)).